Consider the following 118-residue polypeptide: NADH-quinone oxidoreductase subunit A (118 aa).

The next 3 membrane-spanning stretches (helical) occupy residues 5 to 25 (FAAV…MMLM), 61 to 81 (FLYA…FPWA), and 90 to 110 (FAFI…WYAW).

This sequence belongs to the complex I subunit 3 family. As to quaternary structure, NDH-1 is composed of 14 different subunits. Subunits NuoA, H, J, K, L, M, N constitute the membrane sector of the complex.

The protein resides in the cell membrane. The enzyme catalyses a quinone + NADH + 5 H(+)(in) = a quinol + NAD(+) + 4 H(+)(out). Its function is as follows. NDH-1 shuttles electrons from NADH, via FMN and iron-sulfur (Fe-S) centers, to quinones in the respiratory chain. The immediate electron acceptor for the enzyme in this species is believed to be a menaquinone. Couples the redox reaction to proton translocation (for every two electrons transferred, four hydrogen ions are translocated across the cytoplasmic membrane), and thus conserves the redox energy in a proton gradient. This Desulfitobacterium hafniense (strain Y51) protein is NADH-quinone oxidoreductase subunit A.